The chain runs to 290 residues: Dehydrodolichyl diphosphate synthase CPT3 (290 aa).

Asp-42 is an active-site residue.

This sequence belongs to the UPP synthase family. Requires Mg(2+) as cofactor. In terms of tissue distribution, expressed in leaf trichomes and stem trichomes. Expressed at low levels in young leaves, stems and old leaves.

The protein resides in the cytoplasm. The protein localises to the cytosol. The enzyme catalyses n isopentenyl diphosphate + (2E,6E)-farnesyl diphosphate = a di-trans,poly-cis-polyprenyl diphosphate + n diphosphate. Functionally, catalyzes cis-prenyl chain elongation to produce the polyprenyl backbone of dolichol, a glycosyl carrier-lipid required for the biosynthesis of several classes of glycoprotein. In Solanum lycopersicum (Tomato), this protein is Dehydrodolichyl diphosphate synthase CPT3.